A 1325-amino-acid chain; its full sequence is Protein suppressor of sable (1325 aa).

2 disordered regions span residues 1 to 36 (MSVALADEPLIDLEEDLEDGEIDDDEEDEQQSSKIQ) and 74 to 326 (VCLQ…GGSN). Residues 9 to 30 (PLIDLEEDLEDGEIDDDEEDEQ) show a composition bias toward acidic residues. Residues 119–131 (RSSNQDTSDQSLE) show a composition bias toward polar residues. Residues 138-327 (ATANPLLQST…GQEKMGGSNR (190 aa)) form a highly charged region. Residues 149 to 158 (SSRRRKRKKE) show a composition bias toward basic residues. Residues 149-179 (SSRRRKRKKEREREQKKDKEQQNRSRRDEND) adopt a coiled-coil conformation. The segment covering 159-178 (REREQKKDKEQQNRSRRDEN) has biased composition (basic and acidic residues). The segment covering 236 to 246 (AGLGAGGGGGY) has biased composition (gly residues). A coiled-coil region spans residues 276 to 296 (NEKEHQRGVNNRKRRDRDRLE). 2 C3H1-type zinc fingers span residues 330 to 357 (PRKLELCKFYLMDCCAKRDKCSYMHKEF) and 358 to 381 (PCKYYYLGMDCYAGDDCLFYHGEP). A coiled-coil region spans residues 444 to 478 (KRQDHQMQQQQQQLQHQQLQQQQEQQQTQQQAAAD). Residues 499-509 (KRKSRWTEKMG) are compositionally biased toward basic and acidic residues. Disordered stretches follow at residues 499–535 (KRKSRWTEKMGAKAAAGAAGSSERDSTSPDAKPLPPH), 588–622 (KAEDAKPQTQAELESSTPPSKRETEANNSNSKSNG), 639–695 (FSGN…PSVF), 710–745 (SARQLLPASATSPNQENAHLPGGDQSTHKSAPIGGG), 780–835 (AHSG…ALPP), 979–1058 (DLET…GGSK), 1143–1170 (EPNGNGAALGGGGDSGGGVGGGGGGGGV), and 1295–1325 (RGGHFPGGGSGGNGNGNNRNQRGGNHRNRNI). A Phosphoserine modification is found at Ser-524. Residues 594–606 (PQTQAELESSTPP) are compositionally biased toward polar residues. Thr-604 carries the post-translational modification Phosphothreonine. A compositionally biased stretch (acidic residues) spans 644-668 (PLDDDRDDDEQLIIDDGNDSTAEED). Ser-663 carries the phosphoserine modification. Thr-664 bears the Phosphothreonine mark. A compositionally biased stretch (polar residues) spans 710 to 726 (SARQLLPASATSPNQEN). Residues 790–800 (SNENSNSNSHS) show a composition bias toward low complexity. Residues 1003–1015 (SVPPPSMRVPPPN) are compositionally biased toward pro residues. A compositionally biased stretch (basic and acidic residues) spans 1021-1033 (PTVRTDPRRDPRR). The segment covering 1042-1056 (GASTANTTAPNASGG) has biased composition (low complexity). Gly residues-rich tracts occupy residues 1149–1170 (AALGGGGDSGGGVGGGGGGGGV) and 1295–1309 (RGGHFPGGGSGGNGN).

The protein belongs to the suppressor of sable family. As to quaternary structure, interacts with Wdr82.

It is found in the nucleus. The protein resides in the chromosome. RNA-binding protein that suppresses transcription of some RNAs. Together with Wdr82, part of a transcription termination checkpoint that promotes transcription termination of RNAs and their subsequent degradation by the nuclear exosome. Promotes transcription termination of aberrant RNAs, transcripts from genes containing a transposon inserted at their very 5' end or RNAs from heat-shock-inducible repetitive element. Binds RNA preferentially at a sequence that resembles a cryptic 5'-splice site. The sequence is that of Protein suppressor of sable from Drosophila melanogaster (Fruit fly).